A 179-amino-acid chain; its full sequence is Deoxyuridine 5'-triphosphate nucleotidohydrolase, mitochondrial (179 aa).

The transit peptide at 1–41 (MPIEQKYFSLFSNLFKRLTTNNNNNNYLKMAPPNFETFKVK) directs the protein to the mitochondrion. Residues 97–99 (RSG), 111–114 (GVID), Gly-122, Arg-165, and 170–171 (FG) each bind dUTP.

This sequence belongs to the dUTPase family. Homotrimer. Mg(2+) serves as cofactor.

Its subcellular location is the mitochondrion. The enzyme catalyses dUTP + H2O = dUMP + diphosphate + H(+). Its pathway is pyrimidine metabolism; dUMP biosynthesis; dUMP from dCTP (dUTP route): step 2/2. This enzyme is involved in nucleotide metabolism: it produces dUMP, the immediate precursor of thymidine nucleotides and it decreases the intracellular concentration of dUTP so that uracil cannot be incorporated into DNA. The chain is Deoxyuridine 5'-triphosphate nucleotidohydrolase, mitochondrial (dut) from Dictyostelium discoideum (Social amoeba).